We begin with the raw amino-acid sequence, 430 residues long: Cyclin-A2 (430 aa).

Methionine 1 bears the N-acetylmethionine mark. 2 disordered regions span residues 1-80 and 106-129; these read MLGS…PIND and EEIQKRPTESKKSESEDVLAFNSA. A Phosphoserine modification is found at serine 5. Residues 107-120 are compositionally biased toward basic and acidic residues; it reads EIQKRPTESKKSES.

Belongs to the cyclin family. Cyclin AB subfamily. As to quaternary structure, interacts with the CDK1 and CDK2 protein kinases to form serine/threonine kinase holoenzyme complexes. Interacts with CDK1 (hyperphosphorylated form in G1 and underphosphorylated forms in S and G2). Interacts with CDK2; the interaction increases from G1 to G2. Interacts (associated with CDK2 but not with CDK1) with SCAPER; regulates the activity of CCNA2/CDK2 by transiently maintaining CCNA2 in the cytoplasm. Forms a ternary complex with CDK2 and CDKN1B; CDKN1B inhibits the kinase activity of CDK2 through conformational rearrangements. Interacts with INCA1. In terms of processing, polyubiquitinated via 'Lys-11'-linked ubiquitin by the anaphase-promoting complex (APC/C), leading to its degradation by the proteasome. Deubiquitinated and stabilized by USP37 enables entry into S phase. Ubiquitinated during the G1 phase by the SCF(FBXO31) complex, leading to its proteasomal degradation.

Its subcellular location is the nucleus. The protein resides in the cytoplasm. Cyclin which controls both the G1/S and the G2/M transition phases of the cell cycle. Functions through the formation of specific serine/threonine kinase holoenzyme complexes with the cyclin-dependent protein kinases CDK1 and CDK2. The cyclin subunit confers the substrate specificity of these complexes and differentially interacts with and activates CDK1 and CDK2 throughout the cell cycle. This chain is Cyclin-A2, found in Bos taurus (Bovine).